Reading from the N-terminus, the 142-residue chain is Baculoviral IAP repeat-containing protein 5 (142 aa).

Residues 18-88 (RVSTFKNWPF…KHSSGCAFLS (71 aa)) form a BIR repeat. Residue Ser20 is modified to Phosphoserine; by AURKC. Lys23 carries the N6-acetyllysine modification. Thr34 carries the post-translational modification Phosphothreonine; by CDK1 and CDK15. At Thr48 the chain carries Phosphothreonine. Zn(2+) contacts are provided by Cys57, Cys60, His77, and Cys84. Residues Lys90, Lys110, Lys112, and Lys115 each carry the N6-acetyllysine modification. Thr117 is subject to Phosphothreonine; by AURKB. At Lys129 the chain carries N6-acetyllysine.

This sequence belongs to the IAP family. In terms of assembly, monomer or homodimer. Exists as a homodimer in the apo state and as a monomer in the CPC-bound state. The monomer protects cells against apoptosis more efficiently than the dimer. Only the dimeric form is capable of enhancing tubulin stability in cells. When phosphorylated, interacts with LAMTOR5/HBXIP; the resulting complex binds pro-CASP9, as well as active CASP9, but much less efficiently. Component of the chromosomal passenger complex (CPC) composed of at least BIRC5/survivin, CDCA8/borealin, INCENP, AURKB or AURKC; in the complex forms a triple-helix bundle-based subcomplex with INCENP and CDCA8. Interacts with JTB. Interacts (via BIR domain) with histone H3 phosphorylated at 'Thr-3' (H3pT3). Interacts with EVI5. Interacts with GTP-bound RAN in both the S and M phases of the cell cycle. Interacts with USP9X. Interacts with tubulin. Interacts with BIRC2/c-IAP1. The acetylated form at Lys-129 interacts with STAT3. The monomeric form deacetylated at Lys-129 interacts with XPO1/CRM1. The monomeric form interacts with XIAP/BIRC4. Both the dimeric and monomeric form can interact with DIABLO/SMAC. Interacts with BIRC6/bruce. Interacts with FBXL7; this interaction facilitates the polyubiquitination and subsequent proteasomal degradation of BIRC5 by the SCF(FBXL7) E3 ubiquitin-protein ligase complex. In terms of processing, ubiquitinated by the Cul9-RING ubiquitin-protein ligase complex, leading to its degradation. Ubiquitination is required for centrosomal targeting. Deubiquitinated by USP35 or USP38; leading to stabilization. Post-translationally, acetylation at Lys-129 results in its homodimerization, while deacetylation promotes the formation of monomers which heterodimerize with XPO1/CRM1 which facilitates its nuclear export. The acetylated form represses STAT3 transactivation. The dynamic equilibrium between its acetylation and deacetylation at Lys-129 determines its interaction with XPO1/CRM1, its subsequent subcellular localization, and its ability to inhibit STAT3 transactivation. In vitro phosphorylation at Thr-117 by AURKB prevents interaction with INCENP and localization to mitotic chromosomes. Phosphorylation at Thr-48 by CK2 is critical for its mitotic and anti-apoptotic activities. Phosphorylation at Thr-34 by CDK15 is critical for its anti-apoptotic activity. Phosphorylation at Ser-20 by AURKC is critical for regulation of proper chromosome alignment and segregation, and possibly cytokinesis.

It is found in the cytoplasm. The protein localises to the nucleus. Its subcellular location is the chromosome. It localises to the centromere. The protein resides in the cytoskeleton. It is found in the spindle. The protein localises to the kinetochore. Its subcellular location is the midbody. In terms of biological role, multitasking protein that has dual roles in promoting cell proliferation and preventing apoptosis. Component of a chromosome passage protein complex (CPC) which is essential for chromosome alignment and segregation during mitosis and cytokinesis. Acts as an important regulator of the localization of this complex; directs CPC movement to different locations from the inner centromere during prometaphase to midbody during cytokinesis and participates in the organization of the center spindle by associating with polymerized microtubules. Involved in the recruitment of CPC to centromeres during early mitosis via association with histone H3 phosphorylated at 'Thr-3' (H3pT3) during mitosis. The complex with RAN plays a role in mitotic spindle formation by serving as a physical scaffold to help deliver the RAN effector molecule TPX2 to microtubules. May counteract a default induction of apoptosis in G2/M phase. The acetylated form represses STAT3 transactivation of target gene promoters. May play a role in neoplasia. Inhibitor of CASP3 and CASP7. Essential for the maintenance of mitochondrial integrity and function. The sequence is that of Baculoviral IAP repeat-containing protein 5 (BIRC5) from Bos taurus (Bovine).